A 377-amino-acid chain; its full sequence is Flagellin C (377 aa).

Coiled-coil stretches lie at residues S103 to T129 and V301 to D340.

Belongs to the bacterial flagellin family. Heteromer of multiple flagellin subunits including FlaA, FlaB, FlaC, FlaD and possibly FlaE.

It is found in the secreted. The protein resides in the bacterial flagellum. Flagellin is the subunit protein which polymerizes to form the filaments of bacterial flagella. FlaC is not essential for flagellar synthesis and motility. This chain is Flagellin C (flaC), found in Vibrio anguillarum (Listonella anguillarum).